The sequence spans 172 residues: Propanediol dehydratase small subunit (172 aa).

It belongs to the diol/glycerol dehydratase small subunit family. As to quaternary structure, the propanediol dehydratase enzyme is a heterotrimeric complex composed of a large (PduC), a medium (PduD) and a small (PduE) subunit. Adenosylcob(III)alamin serves as cofactor.

The protein resides in the bacterial microcompartment. It carries out the reaction propane-1,2-diol = propanal + H2O. It participates in polyol metabolism; 1,2-propanediol degradation. Part of the PduCDE complex that catalyzes the dehydration of 1,2-propanediol (1,2-PD) to propionaldehyde. Localized in the bacterial microcompartment (BMC) dedicated to 1,2-PD degradation. Functionally, expression of a cosmid containing the full 21-gene pdu operon in E.coli allows E.coli to grow on 1,2-propanediol (1,2-PD) with the appearance of BMCs in its cytoplasm. In terms of biological role, the 1,2-PD-specific bacterial microcompartment (BMC) concentrates low levels of 1,2-PD catabolic enzymes, concentrates volatile reaction intermediates thus enhancing pathway flux and keeps the level of toxic, mutagenic propionaldehyde low. This chain is Propanediol dehydratase small subunit, found in Citrobacter freundii.